We begin with the raw amino-acid sequence, 587 residues long: MATAAYEQLKLHITPEKFYVEACDDGADDVLTIDRVSTEVTLAVKKDVPPSAVTRPIFGILGTIHLVAGNYLIVITKKIKVGEFFSHVIWKATDFDVLSYKKTMLHLTDIQLQDNKTFLAMLNHVLNVDGFYFSTTYDLTHTLQRLSNTSPEFQEMSLLERADQRFVWNGHLLRELSAQPEVHRFALPVLHGFITMHSCSINGKYFDWILISRRSCFRAGVRYYVRGIDSEGHAANFVETEQIVHYNGSKASFVQTRGSIPVFWSQRPNLKYKPLPQISKVANHMDGFQRHFDSQVIIYGKQVIINLINQKGSEKPLEQTFATMVSSLGSGMMRYIAFDFHKECKNMRWDRLSILLDQVAEMQDELSYFLVDSAGQVVANQEGVFRSNCMDCLDRTNVIQSLLARRSLQAQLQRLGVLHVGQKLEEQDEFEKIYKNAWADNANACAKQYAGTGALKTDFTRTGKRTHLGLIMDGWNSMIRYYKNNFSDGFRQDSIDLFLGNYSVDELESHSPLSVPRDWKFLALPIIMVVAFSMCIICLLMAGDTWTETLAYVLFWGVASIGTFFIILYNGKDFVDAPRLVQKEKID.

Residues 1–520 are Cytoplasmic-facing; that stretch reads MATAAYEQLK…SPLSVPRDWK (520 aa). The region spanning 122-451 is the SAC domain; it reads LNHVLNVDGF…ANACAKQYAG (330 aa). The interval 452-587 is essential for phosphatidylinositol-4-phosphate phosphatase activity; sequence TGALKTDFTR…PRLVQKEKID (136 aa). Lysine 456 carries the post-translational modification N6-acetyllysine. The chain crosses the membrane as a helical span at residues 521–541; the sequence is FLALPIIMVVAFSMCIICLLM. Residues 542–548 lie on the Lumenal side of the membrane; it reads AGDTWTE. The helical transmembrane segment at 549–569 threads the bilayer; it reads TLAYVLFWGVASIGTFFIILY. At 570-587 the chain is on the cytoplasmic side; that stretch reads NGKDFVDAPRLVQKEKID.

In terms of assembly, interacts with TMEM39A. Interacts with SEC23A and SEC24A; this interaction is reduced in the absence of TMEM39A. Interacts with PLEKHA3 and VAPA and/or VAPB to form a ternary complex.

It is found in the endoplasmic reticulum membrane. The protein resides in the golgi apparatus membrane. The enzyme catalyses a 1,2-diacyl-sn-glycero-3-phospho-(1D-myo-inositol-3-phosphate) + H2O = a 1,2-diacyl-sn-glycero-3-phospho-(1D-myo-inositol) + phosphate. It catalyses the reaction a 1,2-diacyl-sn-glycero-3-phospho-(1D-myo-inositol 4-phosphate) + H2O = a 1,2-diacyl-sn-glycero-3-phospho-(1D-myo-inositol) + phosphate. Functionally, phosphoinositide phosphatase which catalyzes the hydrolysis of phosphatidylinositol 4-phosphate (PtdIns(4)P), phosphatidylinositol 3-phosphate (PtdIns(3)P) and has low activity towards phosphatidylinositol-3,5-bisphosphate (PtdIns(3,5)P2). Shows a very robust PtdIns(4)P phosphatase activity when it binds PtdIns(4)P in a 'cis' configuration in the cellular environment, with much less activity seen when it binds PtdIns(4)P in 'trans' configuration. PtdIns(4)P phosphatase activity (when it binds PtdIns(4)P in 'trans' configuration) is enhanced in the presence of PLEKHA3. This Pongo abelii (Sumatran orangutan) protein is Phosphatidylinositol-3-phosphatase SAC1 (SACM1L).